The sequence spans 642 residues: Influenza virus NS1A-binding protein homolog (642 aa).

Residues Cys-32 to Lys-99 form the BTB domain. The BACK domain maps to Cys-134–Asp-233. 5 positions are modified to phosphoserine: Ser-246, Ser-277, Ser-322, Ser-336, and Ser-338. Residues Lys-257–Ser-281 are disordered. The span at Lys-265 to Ser-281 shows a compositional bias: polar residues. Kelch repeat units lie at residues Lys-369–Gly-415, Gln-416–Gly-463, Leu-465–Gly-512, Tyr-513–Gly-559, Leu-561–Asn-606, and Ile-608–Phe-642.

The protein belongs to the BTB-kelch protein family. In terms of assembly, homodimer; through the BTB domain. Interacts with AHR/Aryl hydrocarbon receptor. Interacts (via BACK domain) with pre-mRNA-binding protein HNRNPK; the interaction is direct. Interacts (via BACK domain) with splicing factor PTBP1; the interaction is direct. Interacts (via Kelch repeats) with RNA polymerase POLR2A (via C-terminal domain). Interacts (via BACK domain) with splicing factor SNRPA; the interaction is indirect. Interacts (via Kelch repeats) with splicing factor SART1. Interacts (via BACK domain) with ALYREF; the interaction is indirect and likely plays a role in mRNA nuclear export. Interacts (via Kelch repeats) with KLHL20 (via Kelch repeats); this interaction blocks the assembly of Cul3-KLHL20 complex. As to expression, ubiquitous expression. In the heart, the highest expression is detected in the ventricles and the lowest in the atria. Expressed in dendrites and spines in neurons.

The protein localises to the cytoplasm. It is found in the cytoskeleton. It localises to the nucleus. In terms of biological role, involved in many cell functions, including pre-mRNA splicing, the aryl hydrocarbon receptor (AHR) pathway, F-actin organization and protein ubiquitination. Plays a role in the dynamic organization of the actin skeleton as a stabilizer of actin filaments by association with F-actin through Kelch repeats. Protects cells from cell death induced by actin destabilization. Functions as a modifier of the AHR/Aryl hydrocarbon receptor pathway increasing the concentration of AHR available to activate transcription. In addition, functions as a negative regulator of BCR(KLHL20) E3 ubiquitin ligase complex to prevent ubiquitin-mediated proteolysis of PML and DAPK1, two tumor suppressors. Inhibits pre-mRNA splicing (in vitro). May play a role in mRNA nuclear export. Its function is as follows. May play a role in cell cycle progression in the nucleus. This Mus musculus (Mouse) protein is Influenza virus NS1A-binding protein homolog.